The sequence spans 96 residues: Phosphoribosyl-ATP pyrophosphatase (96 aa).

This sequence belongs to the PRA-PH family.

It is found in the cytoplasm. The catalysed reaction is 1-(5-phospho-beta-D-ribosyl)-ATP + H2O = 1-(5-phospho-beta-D-ribosyl)-5'-AMP + diphosphate + H(+). It functions in the pathway amino-acid biosynthesis; L-histidine biosynthesis; L-histidine from 5-phospho-alpha-D-ribose 1-diphosphate: step 2/9. The protein is Phosphoribosyl-ATP pyrophosphatase of Methanobrevibacter smithii (strain ATCC 35061 / DSM 861 / OCM 144 / PS).